Here is a 1983-residue protein sequence, read N- to C-terminus: Nonribosomal peptide synthetase verP (1983 aa).

Positions 11–405 (FAQAASRCPD…FRGRKDRTVK (395 aa)) are adenylation 1. Residues 526–602 (DRHLDTLLTV…DVAPLITSRA (77 aa)) form the Carrier 1 domain. Ser563 carries the post-translational modification O-(pantetheine 4'-phosphoryl)serine. Residues 769-1047 (ETDELTVVLT…GQHFKHALYS (279 aa)) form a condensation 1 region. An adenylation 2 region spans residues 1089 to 1469 (QVMGQFPSLI…GRIDRLVKLR (381 aa)). Positions 1584–1662 (ITRPKIEDKL…DQINMVRALL (79 aa)) constitute a Carrier 2 domain. An O-(pantetheine 4'-phosphoryl)serine modification is found at Ser1622. A condensation 2 region spans residues 1652–1976 (KDQINMVRAL…GGLEHPLFEC (325 aa)).

The protein belongs to the NRP synthetase family.

It functions in the pathway mycotoxin biosynthesis. Nonribosomal peptide synthetase; part of the gene cluster that mediates the biosynthesis of 11'-deoxyverticillin A, one of the dimeric epipolythiodioxopiperazines (ETPs) from the verticillin family that act as mycotoxins. 11'-deoxyverticillin A is required for normal conidiation. The nonribosomal peptide synthetase verP is speculated to be responsible for condensation of amino acids to form the carbon skeleton of verticillin, whereas the cluster-specific tailoring enzymes are involved in further modifications leading to the production of 11'-deoxyverticillin A. This is Nonribosomal peptide synthetase verP from Clonostachys rogersoniana.